Reading from the N-terminus, the 111-residue chain is UPF0060 membrane protein xcc-b100_1273 (111 aa).

4 consecutive transmembrane segments (helical) span residues 8 to 28 (LLLF…PYLW), 34 to 54 (SVWL…LLTL), 62 to 82 (VYAA…WWVD), and 91 to 111 (LLGA…PRSG).

It belongs to the UPF0060 family.

It is found in the cell inner membrane. This Xanthomonas campestris pv. campestris (strain B100) protein is UPF0060 membrane protein xcc-b100_1273.